A 155-amino-acid polypeptide reads, in one-letter code: Small ribosomal subunit protein uS7cz/uS7cy (155 aa).

The protein belongs to the universal ribosomal protein uS7 family. Part of the 30S ribosomal subunit.

The protein localises to the plastid. It localises to the chloroplast. Functionally, one of the primary rRNA binding proteins, it binds directly to 16S rRNA where it nucleates assembly of the head domain of the 30S subunit. The sequence is that of Small ribosomal subunit protein uS7cz/uS7cy (rps7-A) from Nandina domestica (Heavenly bamboo).